An 811-amino-acid chain; its full sequence is Methionine--tRNA ligase (811 aa).

Residues Pro11 to Asn21 carry the 'HIGH' region motif. Residues Cys142, Cys145, Cys155, and Cys158 each coordinate Zn(2+). The short motif at Lys344 to Ser348 is the 'KMSKS' region element. An ATP-binding site is contributed by Lys347. The tract at residues Gly606–Asp640 is disordered. Residues Asn620–Met635 show a composition bias toward basic and acidic residues. Residues Phe648–Thr753 form the tRNA-binding domain.

It belongs to the class-I aminoacyl-tRNA synthetase family. MetG type 1 subfamily. As to quaternary structure, homodimer. Zn(2+) serves as cofactor.

It is found in the cytoplasm. It catalyses the reaction tRNA(Met) + L-methionine + ATP = L-methionyl-tRNA(Met) + AMP + diphosphate. In terms of biological role, is required not only for elongation of protein synthesis but also for the initiation of all mRNA translation through initiator tRNA(fMet) aminoacylation. The chain is Methionine--tRNA ligase from Treponema pallidum (strain Nichols).